The chain runs to 444 residues: Phosphoglucosamine mutase (444 aa).

The active-site Phosphoserine intermediate is Ser100. Mg(2+) contacts are provided by Ser100, Asp240, Asp242, and Asp244. At Ser100 the chain carries Phosphoserine.

This sequence belongs to the phosphohexose mutase family. The cofactor is Mg(2+). In terms of processing, activated by phosphorylation.

It catalyses the reaction alpha-D-glucosamine 1-phosphate = D-glucosamine 6-phosphate. Its function is as follows. Catalyzes the conversion of glucosamine-6-phosphate to glucosamine-1-phosphate. In Desulforamulus reducens (strain ATCC BAA-1160 / DSM 100696 / MI-1) (Desulfotomaculum reducens), this protein is Phosphoglucosamine mutase.